A 391-amino-acid polypeptide reads, in one-letter code: GATA-binding factor 6-A (391 aa).

The segment at 57–111 (GAHSVNSHWSQATSESSSFNNSSPHTSSRYHYPPSPPMHNGSTRDTGYSSSLTVS) is disordered. The span at 66–83 (SQATSESSSFNNSSPHTS) shows a compositional bias: low complexity. The span at 96-111 (NGSTRDTGYSSSLTVS) shows a compositional bias: polar residues. 2 GATA-type zinc fingers span residues 182-206 (CVNC…CNAC) and 236-260 (CANC…CNAC). A disordered region spans residues 274 to 355 (AMKKEGIQTR…TESTSPNSNT (82 aa)). Over residues 282–291 (TRKRKPKTLN) the composition is skewed to basic residues. Positions 292–319 (KSKSSSSNGNSSHQISMTPTSTTSSTNS) are enriched in low complexity. The segment covering 326–355 (GSPSQNTTPVVASSLMSTQQTESTSPNSNT) has biased composition (polar residues).

In embryos, expressed in the presumptive heart mesoderm. In adults, expressed at high levels in heart, small intestine, and stomach and at lower levels in lung, pancreas and colon.

Its subcellular location is the nucleus. Its function is as follows. Transcriptional activator that binds 5'-GATA-3'-containing motifs within gene promoters. Regulates cardiac-specific transcription during embryogenesis and thereby cardiogenesis. The polypeptide is GATA-binding factor 6-A (gata6-a) (Xenopus laevis (African clawed frog)).